The following is a 319-amino-acid chain: Coproporphyrin III ferrochelatase 2 (319 aa).

Fe-coproporphyrin III-binding positions include tyrosine 13, arginine 30, 46–47 (RY), serine 54, and tyrosine 125. The Fe(2+) site is built by histidine 181 and glutamate 262.

It belongs to the ferrochelatase family.

It localises to the cytoplasm. It carries out the reaction Fe-coproporphyrin III + 2 H(+) = coproporphyrin III + Fe(2+). Its pathway is porphyrin-containing compound metabolism; protoheme biosynthesis. Involved in coproporphyrin-dependent heme b biosynthesis. Catalyzes the insertion of ferrous iron into coproporphyrin III to form Fe-coproporphyrin III. This Bacillus anthracis protein is Coproporphyrin III ferrochelatase 2.